The chain runs to 35 residues: Potassium channel toxin alpha-KTx 6.12 (35 aa).

Pyrrolidone carboxylic acid is present on glutamine 1. 4 disulfides stabilise this stretch: cysteine 4–cysteine 24, cysteine 10–cysteine 29, cysteine 14–cysteine 31, and cysteine 19–cysteine 34. Lysine 35 is modified (lysine amide).

This sequence belongs to the short scorpion toxin superfamily. Potassium channel inhibitor family. Alpha-KTx 06 subfamily. Monomer. As to expression, expressed by the venom gland.

The protein resides in the secreted. Functionally, high affinity blocker of Kv1.3/KCNA3 channels of human T cells. Blocks Kv1.2/KCNA2 with an order of magnitude smaller than for Kv1.3/KCNA3. This Anuroctonus phaiodactylus (Mafia scorpion) protein is Potassium channel toxin alpha-KTx 6.12.